The sequence spans 128 residues: Kinetoplast-associated protein 4 (128 aa).

A propeptide spanning residues 1-10 (MLRFVPRRLA) is cleaved from the precursor. Residues 60 to 87 (AHPGFKRKEKEPKELKAAKAAKTSTPRA) are disordered. The segment covering 65–76 (KRKEKEPKELKA) has biased composition (basic and acidic residues).

This sequence belongs to the KAP family. Associates with the kinetoplast DNA network.

It is found in the mitochondrion matrix. It localises to the kinetoplast. Functionally, histone H1-like DNA-binding protein involved in the organization and segregation of kinetoplast DNA (kDNA). The mitochondrial DNA of kinetoplastid protozoa consists of about 5,000 minicircles and 20 to 30 maxicircles. These circular DNAs are held together by catenation into a highly organized compact disk structure referred to as a kinetoplast DNA (kDNA) network. Binds preferentially to a specific fragment of minicircle DNA and is able to compact kDNA networks through DNA charge neutralization and condensation. The protein is Kinetoplast-associated protein 4 (KAP4) of Crithidia fasciculata.